The primary structure comprises 448 residues: tRNA wybutosine-synthesizing protein 2 homolog (448 aa).

Residues Ser-218, Lys-225, Glu-265, and 293-294 contribute to the S-adenosyl-L-methionine site; that span reads DN.

Belongs to the class I-like SAM-binding methyltransferase superfamily. TRM5/TYW2 family.

The catalysed reaction is 4-demethylwyosine(37) in tRNA(Phe) + S-adenosyl-L-methionine = 4-demethyl-7-[(3S)-3-amino-3-carboxypropyl]wyosine(37) in tRNA(Phe) + S-methyl-5'-thioadenosine + H(+). It functions in the pathway tRNA modification; wybutosine-tRNA(Phe) biosynthesis. In terms of biological role, S-adenosyl-L-methionine-dependent transferase that acts as a component of the wybutosine biosynthesis pathway. Wybutosine is a hyper modified guanosine with a tricyclic base found at the 3'-position adjacent to the anticodon of eukaryotic phenylalanine tRNA. Catalyzes the transfer of the alpha-amino-alpha-carboxypropyl (acp) group from S-adenosyl-L-methionine to the C-7 position of 4-demethylwyosine (imG-14) to produce wybutosine-86. The protein is tRNA wybutosine-synthesizing protein 2 homolog (TRMT12) of Macaca fascicularis (Crab-eating macaque).